Consider the following 141-residue polypeptide: Galactose-6-phosphate isomerase subunit LacA 1 (141 aa).

The protein belongs to the LacAB/RpiB family. Heteromultimeric protein consisting of LacA and LacB.

The enzyme catalyses aldehydo-D-galactose 6-phosphate = keto-D-tagatose 6-phosphate. The protein operates within carbohydrate metabolism; D-galactose 6-phosphate degradation; D-tagatose 6-phosphate from D-galactose 6-phosphate: step 1/1. The chain is Galactose-6-phosphate isomerase subunit LacA 1 from Streptococcus agalactiae serotype III (strain NEM316).